Here is a 462-residue protein sequence, read N- to C-terminus: Alkaline ceramidase TOD1 (462 aa).

The Cytoplasmic portion of the chain corresponds to 1–18 (MGKFITTTLSPPLYARSK). Residues 19–39 (LLCFSLLYLFSTIFLFLYVSL) form a helical membrane-spanning segment. Residues 40-462 (SRNQCIFRYS…CKNYLTDMWG (423 aa)) lie on the Lumenal side of the membrane. Residues asparagine 121, asparagine 132, and asparagine 449 are each glycosylated (N-linked (GlcNAc...) asparagine).

This sequence belongs to the alkaline ceramidase family. Preferentially expressed in pollen grains, pollen tubes and silique guard cells, but barely detectable in roots, stems and leaves.

It is found in the golgi apparatus membrane. It catalyses the reaction an N-acylsphing-4-enine + H2O = sphing-4-enine + a fatty acid. It functions in the pathway lipid metabolism. In terms of biological role, endoplasmic reticulum ceramidase that catalyzes the hydrolysis of ceramides into sphingosine and free fatty acids at alkaline pH (e.g. pH 9.5). Inactive on phytoceramide. Involved in the regulation of turgor pressure in guard cells and pollen tubes. The protein is Alkaline ceramidase TOD1 of Arabidopsis thaliana (Mouse-ear cress).